We begin with the raw amino-acid sequence, 218 residues long: MARKGILGTKLGMTQVFDENNKVVPVTVVKAGPNVVTRIRTPERDGYSAVQLAYGEISPRKVNKPVTGQYAAAGVNPRRHLAELRLDDEAAAAEYEVGQELTAEIFADGAYVDVTGTSKGKGFAGTMKRHGFRGQGASHGAQAVHRRPGSIGGCATPGRVFKGTRMSGRMGSDRVTTQNLKVHKVDAENGVLLIKGAIPGRNGGLVVVRSAIKRGEKA.

Residues 133 to 158 form a disordered region; that stretch reads RGQGASHGAQAVHRRPGSIGGCATPG.

It belongs to the universal ribosomal protein uL3 family. As to quaternary structure, part of the 50S ribosomal subunit. Forms a cluster with proteins L14 and L19.

Functionally, one of the primary rRNA binding proteins, it binds directly near the 3'-end of the 23S rRNA, where it nucleates assembly of the 50S subunit. The polypeptide is Large ribosomal subunit protein uL3 (Mycolicibacterium vanbaalenii (strain DSM 7251 / JCM 13017 / BCRC 16820 / KCTC 9966 / NRRL B-24157 / PYR-1) (Mycobacterium vanbaalenii)).